The chain runs to 362 residues: Glutaminase-asparaginase (362 aa).

An N-terminal signal peptide occupies residues 1 to 25 (MKSALKTFVPGALALLLLFPVAAQA). An Asparaginase/glutaminase domain is found at 35 to 362 (ANVVILATGG…KELQRMFWEY (328 aa)). The active-site Acyl-ester intermediate is the Thr-45. Residues Ser-92 and 125-126 (TD) contribute to the substrate site.

It belongs to the asparaginase 1 family. As to quaternary structure, homotetramer.

It localises to the periplasm. It catalyses the reaction L-glutamine + H2O = L-glutamate + NH4(+). The catalysed reaction is L-asparagine + H2O = L-aspartate + NH4(+). The protein is Glutaminase-asparaginase of Pseudomonas fluorescens biotype A.